Here is a 168-residue protein sequence, read N- to C-terminus: Putative insulin-like growth factor 2 antisense gene protein (168 aa).

Disordered stretches follow at residues 1 to 91 (MSKR…ERSN) and 108 to 168 (PLRR…RPGK). Basic residues-rich tracts occupy residues 59–70 (AQRRRGSARRGA) and 159–168 (RWRQPGRPGK).

The protein is Putative insulin-like growth factor 2 antisense gene protein (IGF2-AS) of Homo sapiens (Human).